A 1799-amino-acid polypeptide reads, in one-letter code: Bromodomain and WD repeat-containing protein 3 (1799 aa).

WD repeat units lie at residues 170–209 (IKMHKRILGHLSSVYCVAFDRSGRRIFTGSDDCLVKIWAT), 213–251 (RLLATLRGHSAEISDMAVNYENTLIAAGSCDKVVRVWCL), 255–297 (APVA…FWQW), 307–347 (RPVK…IYYL), 353–393 (EKIA…IWQY), 400–452 (SIVL…VWNS), 456–495 (QLLHTLSGHDDEVFVLEAHPFDQRIILSAGHDGNIFIWDL), and 502–542 (RNYF…LFGF). Residue serine 693 is modified to Phosphoserine. The disordered stretch occupies residues 766–912 (KKPSYPIQRN…KKKKGGLVSM (147 aa)). A compositionally biased stretch (basic residues) spans 784–794 (SLRRTQRKRQH). The segment covering 795–816 (TYLTRSNIEHNSQASSQTSGVQ) has biased composition (polar residues). Residues 817-828 (EDSDSSSEEDET) are compositionally biased toward acidic residues. The span at 845–858 (SESSSSDSSSEYSD) shows a compositional bias: low complexity. Residues 875-884 (RQATQKIYSS) show a composition bias toward polar residues. Phosphoserine is present on residues serine 884 and serine 885. A compositionally biased stretch (basic residues) spans 897 to 907 (KKPKQTKKKKG). A Bromo 1 domain is found at 1136–1243 (WGAHSRDEEC…DVLLRFIGDQ (108 aa)). Disordered regions lie at residues 1258–1291 (EDPDSSDLEEDSEMVDLDSDGPGTSSGRRAKCRG), 1321–1366 (EPFR…IDTP), 1435–1482 (IQSQ…QNTS), and 1517–1723 (SPSS…AKRA). The span at 1260–1276 (PDSSDLEEDSEMVDLDS) shows a compositional bias: acidic residues. Residues 1298-1427 (CNPDAWKKQC…ALFENHIKNI (130 aa)) form the Bromo 2 domain. A compositionally biased stretch (low complexity) spans 1333-1348 (PVQQQQEGESSQSVPP). Basic residues predominate over residues 1438 to 1450 (QKRRRPRYRKRLR). Composition is skewed to low complexity over residues 1451-1463 (SSSSSLSSSRAPS) and 1517-1530 (SPSSFSGYSRSGNS). A phosphoserine mark is found at serine 1574 and serine 1576. Residues 1584–1596 (GEEKEMKETKEQV) show a composition bias toward basic and acidic residues. Positions 1598–1623 (LSSSESGELGSSLSSESTSGSDSDSE) are enriched in low complexity. Residues 1624–1640 (STSRTDQDYVDGDHDYS) are compositionally biased toward basic and acidic residues. Composition is skewed to basic residues over residues 1646 to 1663 (RPKRKLRKQHTNGKRNWK) and 1681 to 1694 (RGGRGRGGRGRGGR). Phosphoserine is present on serine 1760.

Its function is as follows. Plays a role in the regulation of cell morphology and cytoskeletal organization. Required in the control of cell shape. The polypeptide is Bromodomain and WD repeat-containing protein 3 (Brwd3) (Mus musculus (Mouse)).